The chain runs to 299 residues: Cytosolic sulfotransferase 1 (299 aa).

51 to 56 lines the 3'-phosphoadenylyl sulfate pocket; it reads KAGTTW. Residue histidine 113 is the Proton acceptor of the active site. Residues arginine 135, serine 143, tyrosine 199, 233 to 238, and 261 to 263 each bind 3'-phosphoadenylyl sulfate; these read VQFDAM and RKG.

It belongs to the sulfotransferase 1 family. Expressed in liver.

The protein localises to the cytoplasm. With respect to regulation, inhibited by Co(2+), Zn(2+), Cd(2+) and Pb(2+) ions. Inactivated by Hg(2+) and Cu(2+) ions. Its function is as follows. Sulfotransferase that utilizes 3'-phospho-5'-adenylyl sulfate (PAPS) as sulfonate donor to catalyze the sulfate conjugation of a variety of xenobiotic and endogenous compounds, including 2-naphthol, hydroxychlorobiphenyls, dopamine and T3 (triiodo-L-thyronine). The polypeptide is Cytosolic sulfotransferase 1 (Danio rerio (Zebrafish)).